Here is a 210-residue protein sequence, read N- to C-terminus: Protein GrpE (210 aa).

2 disordered regions span residues 1 to 40 (MTDD…PDPI) and 191 to 210 (KGGP…EKDA). Positions 11–23 (DATAADAAADATA) are enriched in low complexity.

Belongs to the GrpE family. Homodimer.

It localises to the cytoplasm. Functionally, participates actively in the response to hyperosmotic and heat shock by preventing the aggregation of stress-denatured proteins, in association with DnaK and GrpE. It is the nucleotide exchange factor for DnaK and may function as a thermosensor. Unfolded proteins bind initially to DnaJ; upon interaction with the DnaJ-bound protein, DnaK hydrolyzes its bound ATP, resulting in the formation of a stable complex. GrpE releases ADP from DnaK; ATP binding to DnaK triggers the release of the substrate protein, thus completing the reaction cycle. Several rounds of ATP-dependent interactions between DnaJ, DnaK and GrpE are required for fully efficient folding. The chain is Protein GrpE from Rhizobium johnstonii (strain DSM 114642 / LMG 32736 / 3841) (Rhizobium leguminosarum bv. viciae).